We begin with the raw amino-acid sequence, 45 residues long: Thymosin beta (45 aa).

The disordered stretch occupies residues 1 to 45 (MADKPNMTEITSFDKTKLRKTETQEKNPLPTKETIEQERQGESTP). Basic and acidic residues-rich tracts occupy residues 12–25 (SFDKTKLRKTETQE) and 33–45 (ETIEQERQGESTP).

Belongs to the thymosin beta family.

It localises to the cytoplasm. Its subcellular location is the cytoskeleton. Its function is as follows. Plays an important role in the organization of the cytoskeleton. Binds to and sequesters actin monomers (G actin) and therefore inhibits actin polymerization. This is Thymosin beta (tmsb) from Danio rerio (Zebrafish).